Reading from the N-terminus, the 456-residue chain is Bifunctional protein GlmU (456 aa).

Positions 1–229 (MLNSAMSVVI…ISETDGVNNR (229 aa)) are pyrophosphorylase. UDP-N-acetyl-alpha-D-glucosamine-binding positions include 11-14 (LAAG), Lys25, Gln76, 81-82 (GT), 103-105 (YGD), Gly140, Glu154, Asn169, and Asn227. Asp105 is a binding site for Mg(2+). Asn227 is a Mg(2+) binding site. A linker region spans residues 230–250 (LQLSRLERIYQAEQAEKLLLS). The N-acetyltransferase stretch occupies residues 251–456 (GVMLRDPARF…QGWQRPVKKK (206 aa)). The UDP-N-acetyl-alpha-D-glucosamine site is built by Arg333 and Lys351. The active-site Proton acceptor is His363. UDP-N-acetyl-alpha-D-glucosamine is bound by residues Tyr366 and Asn377. Acetyl-CoA is bound by residues Ala380, 386–387 (NY), Ser405, Ala423, and Arg440.

In the N-terminal section; belongs to the N-acetylglucosamine-1-phosphate uridyltransferase family. This sequence in the C-terminal section; belongs to the transferase hexapeptide repeat family. In terms of assembly, homotrimer. Mg(2+) serves as cofactor.

The protein localises to the cytoplasm. The enzyme catalyses alpha-D-glucosamine 1-phosphate + acetyl-CoA = N-acetyl-alpha-D-glucosamine 1-phosphate + CoA + H(+). It carries out the reaction N-acetyl-alpha-D-glucosamine 1-phosphate + UTP + H(+) = UDP-N-acetyl-alpha-D-glucosamine + diphosphate. Its pathway is nucleotide-sugar biosynthesis; UDP-N-acetyl-alpha-D-glucosamine biosynthesis; N-acetyl-alpha-D-glucosamine 1-phosphate from alpha-D-glucosamine 6-phosphate (route II): step 2/2. It functions in the pathway nucleotide-sugar biosynthesis; UDP-N-acetyl-alpha-D-glucosamine biosynthesis; UDP-N-acetyl-alpha-D-glucosamine from N-acetyl-alpha-D-glucosamine 1-phosphate: step 1/1. It participates in bacterial outer membrane biogenesis; LPS lipid A biosynthesis. Functionally, catalyzes the last two sequential reactions in the de novo biosynthetic pathway for UDP-N-acetylglucosamine (UDP-GlcNAc). The C-terminal domain catalyzes the transfer of acetyl group from acetyl coenzyme A to glucosamine-1-phosphate (GlcN-1-P) to produce N-acetylglucosamine-1-phosphate (GlcNAc-1-P), which is converted into UDP-GlcNAc by the transfer of uridine 5-monophosphate (from uridine 5-triphosphate), a reaction catalyzed by the N-terminal domain. In Salmonella choleraesuis (strain SC-B67), this protein is Bifunctional protein GlmU.